A 168-amino-acid polypeptide reads, in one-letter code: uncharacterized protein (168 aa).

A disordered region spans residues 18-73 (RTTVKTKSHNPKTLYPNNKPRWESKLHAGPKGFQSSRTSEKPGRPDPDPEDDPPIP). Positions 55–64 (TSEKPGRPDP) are enriched in basic and acidic residues. 2 helical membrane-spanning segments follow: residues 84–104 (IVVSVGTPLGLGVAILKVLEV) and 113–133 (VPLWVPYLTTLVTFGSSALGI).

Its subcellular location is the membrane. This is an uncharacterized protein from Arabidopsis thaliana (Mouse-ear cress).